A 514-amino-acid polypeptide reads, in one-letter code: Leucine-rich repeat-containing protein 14B (514 aa).

The stretch at R104–T141 is one LRR 1; degenerate repeat. The LRR 2; degenerate repeat unit spans residues R185–G209. Residues F238 to K277 form an LRR 4; degenerate repeat. LRR repeat units lie at residues M278–L302, Q303–E334, V335–T350, S359–P386, and C387–A411.

This sequence belongs to the PRAME family. LRRC14 subfamily.

This Homo sapiens (Human) protein is Leucine-rich repeat-containing protein 14B.